Consider the following 87-residue polypeptide: Putative defensin-like protein 169 (87 aa).

The signal sequence occupies residues 1 to 21 (MKKTFSFTVLILFVIPLLVTG). Disulfide bonds link cysteine 36–cysteine 86, cysteine 48–cysteine 74, cysteine 53–cysteine 80, and cysteine 57–cysteine 82.

The protein belongs to the DEFL family.

Its subcellular location is the secreted. The polypeptide is Putative defensin-like protein 169 (Arabidopsis thaliana (Mouse-ear cress)).